The primary structure comprises 677 residues: Methionine--tRNA ligase (677 aa).

Positions 15–25 match the 'HIGH' region motif; it reads PYANGSIHLGH. Zn(2+) contacts are provided by Cys146, Cys149, Cys159, and Cys162. The 'KMSKS' region motif lies at 333-337; it reads KMSKS. Lys336 contributes to the ATP binding site. The tRNA-binding domain occupies 575-677; the sequence is DFAKVDLRVA…AGAKPGHQVK (103 aa).

It belongs to the class-I aminoacyl-tRNA synthetase family. MetG type 1 subfamily. As to quaternary structure, homodimer. It depends on Zn(2+) as a cofactor.

It is found in the cytoplasm. The enzyme catalyses tRNA(Met) + L-methionine + ATP = L-methionyl-tRNA(Met) + AMP + diphosphate. In terms of biological role, is required not only for elongation of protein synthesis but also for the initiation of all mRNA translation through initiator tRNA(fMet) aminoacylation. The polypeptide is Methionine--tRNA ligase (Shigella boydii serotype 18 (strain CDC 3083-94 / BS512)).